A 621-amino-acid polypeptide reads, in one-letter code: Myosin-binding protein C, slow-type (621 aa).

3 Ig-like C2-type domains span residues 1–53 (EEIV…VDLR), 54–142 (PLKI…HVID), and 144–241 (PKII…LWIS). T28 is modified (phosphothreonine). S233 bears the Phosphoserine mark. 3 consecutive Fibronectin type-III domains span residues 244–343 (LRLA…TSPP), 344–459 (TLLA…IEPP), and 556–621 (PPQA…VIGN). T420 is subject to Phosphothreonine. The residue at position 445 (Y445) is a Phosphotyrosine. In terms of domain architecture, Ig-like C2-type 4 spans 459-553 (PKIRIPRHLK…ASIDIQIVDR (95 aa)).

The protein belongs to the immunoglobulin superfamily. MyBP family. In terms of assembly, interacts with USP25 (isoform USP25m only); the interaction prevents proteasomal degradation of MYBPC1.

Functionally, thick filament-associated protein located in the crossbridge region of vertebrate striated muscle a bands. Slow skeletal protein that binds to both myosin and actin. In vitro, binds to native thin filaments and modifies the activity of actin-activated myosin ATPase. May modulate muscle contraction or may play a more structural role. This Rattus norvegicus (Rat) protein is Myosin-binding protein C, slow-type (Mybpc1).